Here is a 242-residue protein sequence, read N- to C-terminus: ATP-dependent dethiobiotin synthetase BioD 1 (242 aa).

12-17 (NVGKTT) is an ATP binding site. Thr-16 is a Mg(2+) binding site. The active site involves Lys-37. Asp-66 provides a ligand contact to ATP. Asp-66 and Glu-124 together coordinate Mg(2+). Residues 184–185 (NR), 213–215 (PYL), and Glu-220 each bind ATP.

Belongs to the dethiobiotin synthetase family. In terms of assembly, homodimer. Mg(2+) serves as cofactor.

It is found in the cytoplasm. The catalysed reaction is (7R,8S)-7,8-diammoniononanoate + CO2 + ATP = (4R,5S)-dethiobiotin + ADP + phosphate + 3 H(+). The protein operates within cofactor biosynthesis; biotin biosynthesis; biotin from 7,8-diaminononanoate: step 1/2. Its function is as follows. Catalyzes a mechanistically unusual reaction, the ATP-dependent insertion of CO2 between the N7 and N8 nitrogen atoms of 7,8-diaminopelargonic acid (DAPA, also called 7,8-diammoniononanoate) to form a ureido ring. In Haemophilus influenzae (strain ATCC 51907 / DSM 11121 / KW20 / Rd), this protein is ATP-dependent dethiobiotin synthetase BioD 1.